Consider the following 273-residue polypeptide: Putative pyruvate, phosphate dikinase regulatory protein (273 aa).

Position 149–156 (149–156) interacts with ADP; it reads GPSRTSKT.

This sequence belongs to the pyruvate, phosphate/water dikinase regulatory protein family. PDRP subfamily.

The catalysed reaction is N(tele)-phospho-L-histidyl/L-threonyl-[pyruvate, phosphate dikinase] + ADP = N(tele)-phospho-L-histidyl/O-phospho-L-threonyl-[pyruvate, phosphate dikinase] + AMP + H(+). It carries out the reaction N(tele)-phospho-L-histidyl/O-phospho-L-threonyl-[pyruvate, phosphate dikinase] + phosphate + H(+) = N(tele)-phospho-L-histidyl/L-threonyl-[pyruvate, phosphate dikinase] + diphosphate. Bifunctional serine/threonine kinase and phosphorylase involved in the regulation of the pyruvate, phosphate dikinase (PPDK) by catalyzing its phosphorylation/dephosphorylation. In Rickettsia massiliae (strain Mtu5), this protein is Putative pyruvate, phosphate dikinase regulatory protein.